The primary structure comprises 223 residues: uncharacterized protein (223 aa).

The 112-residue stretch at arginine 5 to leucine 116 folds into the Response regulatory domain. Aspartate 52 bears the 4-aspartylphosphate mark. The ompR/PhoB-type DNA-binding region spans glycine 121–threonine 219.

In terms of processing, phosphorylated by YbdK.

The protein localises to the cytoplasm. Its function is as follows. Member of the two-component regulatory system YbdK/YbdJ. This is an uncharacterized protein from Bacillus subtilis (strain 168).